A 230-amino-acid chain; its full sequence is uncharacterized protein (230 aa).

10–34 provides a ligand contact to NADP(+); that stretch reads VVTGASSGIGEAIAKKLSQQGASIV. Ser-139 lines the substrate pocket. Tyr-152 acts as the Proton acceptor in catalysis.

It belongs to the short-chain dehydrogenases/reductases (SDR) family.

This is an uncharacterized protein from Staphylococcus epidermidis (strain ATCC 12228 / FDA PCI 1200).